The following is a 333-amino-acid chain: Phenylalanine--tRNA ligase alpha subunit (333 aa).

Mg(2+) is bound at residue E254.

The protein belongs to the class-II aminoacyl-tRNA synthetase family. Phe-tRNA synthetase alpha subunit type 1 subfamily. In terms of assembly, tetramer of two alpha and two beta subunits. Requires Mg(2+) as cofactor.

It localises to the cytoplasm. It catalyses the reaction tRNA(Phe) + L-phenylalanine + ATP = L-phenylalanyl-tRNA(Phe) + AMP + diphosphate + H(+). This chain is Phenylalanine--tRNA ligase alpha subunit, found in Xylella fastidiosa (strain M23).